Here is a 119-residue protein sequence, read N- to C-terminus: Holo-[acyl-carrier-protein] synthase (119 aa).

Mg(2+) is bound by residues Asp6 and Glu51.

The protein belongs to the P-Pant transferase superfamily. AcpS family. Requires Mg(2+) as cofactor.

It localises to the cytoplasm. The enzyme catalyses apo-[ACP] + CoA = holo-[ACP] + adenosine 3',5'-bisphosphate + H(+). Transfers the 4'-phosphopantetheine moiety from coenzyme A to a Ser of acyl-carrier-protein. The chain is Holo-[acyl-carrier-protein] synthase from Sulfurovum sp. (strain NBC37-1).